A 249-amino-acid chain; its full sequence is Small ribosomal subunit protein uS2 (249 aa).

It belongs to the universal ribosomal protein uS2 family.

This chain is Small ribosomal subunit protein uS2, found in Chlorobaculum tepidum (strain ATCC 49652 / DSM 12025 / NBRC 103806 / TLS) (Chlorobium tepidum).